The following is a 324-amino-acid chain: Viral cathepsin (324 aa).

The first 16 residues, 1–16, serve as a signal peptide directing secretion; it reads MNKIMLCLLVCGVVHA. A propeptide spans 17 to 113 (activation peptide); sequence ATYDLLKAPN…VILDRPPDRG (97 aa). Intrachain disulfides connect Cys-134-Cys-175, Cys-168-Cys-208, and Cys-263-Cys-311. Cys-137 is an active-site residue. N-linked (GlcNAc...) asparagine; by host glycosylation occurs at Asn-159. Residues His-270 and Asn-290 contribute to the active site.

Belongs to the peptidase C1 family. In terms of processing, synthesized as an inactive proenzyme and activated by proteolytic removal of the inhibitory propeptide.

It carries out the reaction Endopeptidase of broad specificity, hydrolyzing substrates of both cathepsin L and cathepsin B.. In terms of biological role, cysteine protease that plays an essential role in host liquefaction to facilitate horizontal transmission of the virus. May participate in the degradation of foreign protein expressed by the baculovirus system. In Orgyia pseudotsugata (Douglas-fir tussock moth), this protein is Viral cathepsin (VCATH).